We begin with the raw amino-acid sequence, 133 residues long: Nucleoid-associated protein Mb3743c (133 aa).

The disordered stretch occupies residues 98 to 133; the sequence is GAMRPPAPPAAPPGAPGMPGMPGMPGAPGAPPVPGI. Residues 102–113 are compositionally biased toward pro residues; the sequence is PPAPPAAPPGAP.

Belongs to the YbaB/EbfC family. As to quaternary structure, homodimer.

The protein localises to the cytoplasm. It is found in the nucleoid. Binds to DNA and alters its conformation. May be involved in regulation of gene expression, nucleoid organization and DNA protection. The polypeptide is Nucleoid-associated protein Mb3743c (Mycobacterium bovis (strain ATCC BAA-935 / AF2122/97)).